A 555-amino-acid chain; its full sequence is Glutamine--tRNA ligase (555 aa).

The 'HIGH' region signature appears at 34–44 (PEPNGFLHIGH). Residues 35–37 (EPN) and 41–47 (HIGHAKS) each bind ATP. Aspartate 67 and tyrosine 212 together coordinate L-glutamine. ATP is bound by residues threonine 231, 261–262 (RL), and 269–271 (LSK). The short motif at 268 to 272 (VLSKR) is the 'KMSKS' region element.

Belongs to the class-I aminoacyl-tRNA synthetase family. As to quaternary structure, monomer.

The protein localises to the cytoplasm. It carries out the reaction tRNA(Gln) + L-glutamine + ATP = L-glutaminyl-tRNA(Gln) + AMP + diphosphate. In Alteromonas mediterranea (strain DSM 17117 / CIP 110805 / LMG 28347 / Deep ecotype), this protein is Glutamine--tRNA ligase.